A 354-amino-acid chain; its full sequence is UDP-galactose transporter homolog 1 (354 aa).

5 helical membrane passes run 6–26 (GGSI…FLTW), 54–74 (LVIN…YSVV), 95–112 (FFKS…SSPL), 123–143 (LAYL…HFVL), and 148–168 (FPLY…IFTL). N-linked (GlcNAc...) asparagine glycosylation is present at Asn-202. 4 helical membrane passes run 227–247 (YLMC…ALIF), 268–288 (MNIL…FIIL), 295–317 (ILIT…LFGH), and 321–340 (GLQW…EALV).

It belongs to the nucleotide-sugar transporter family. SLC35B subfamily.

It is found in the endoplasmic reticulum membrane. Its function is as follows. May be involved in specific transport of UDP-Gal from the cytosol to the Golgi lumen. Involved in the maintenance of optimal conditions for the folding of secretory pathway proteins in the endoplasmic reticulum. In Debaryomyces hansenii (strain ATCC 36239 / CBS 767 / BCRC 21394 / JCM 1990 / NBRC 0083 / IGC 2968) (Yeast), this protein is UDP-galactose transporter homolog 1 (HUT1).